We begin with the raw amino-acid sequence, 512 residues long: Maturase K (512 aa).

Belongs to the intron maturase 2 family. MatK subfamily.

Its subcellular location is the plastid. The protein localises to the chloroplast. Its function is as follows. Usually encoded in the trnK tRNA gene intron. Probably assists in splicing its own and other chloroplast group II introns. In Lemna aequinoctialis (Lesser duckweed), this protein is Maturase K.